Consider the following 297-residue polypeptide: Nucleotide-binding protein BURPS668_0577 (297 aa).

Position 8 to 15 (8 to 15 (GISGSGKS)) interacts with ATP. GTP is bound at residue 57 to 60 (DARS).

The protein belongs to the RapZ-like family.

In terms of biological role, displays ATPase and GTPase activities. The chain is Nucleotide-binding protein BURPS668_0577 from Burkholderia pseudomallei (strain 668).